The sequence spans 267 residues: Phosphate import ATP-binding protein PstB (267 aa).

The ABC transporter domain maps to 21 to 262 (VAARNLDFYY…PSKQQTEDYI (242 aa)). 53–60 (GPSGCGKS) contacts ATP.

Belongs to the ABC transporter superfamily. Phosphate importer (TC 3.A.1.7) family. As to quaternary structure, the complex is composed of two ATP-binding proteins (PstB), two transmembrane proteins (PstC and PstA) and a solute-binding protein (PstS).

It localises to the cell inner membrane. The enzyme catalyses phosphate(out) + ATP + H2O = ADP + 2 phosphate(in) + H(+). In terms of biological role, part of the ABC transporter complex PstSACB involved in phosphate import. Responsible for energy coupling to the transport system. This is Phosphate import ATP-binding protein PstB from Xanthomonas campestris pv. campestris (strain 8004).